Consider the following 301-residue polypeptide: CPX chromosomal region candidate gene 1 protein (301 aa).

The disordered stretch occupies residues 1–77 (MSYPTKEGSD…ENSELETEIQ (77 aa)). The segment covering 44–60 (VETNPINREPGTATSQE) has biased composition (polar residues).

Expressed in a variety of fetal tissues.

The polypeptide is CPX chromosomal region candidate gene 1 protein (CPXCR1) (Homo sapiens (Human)).